We begin with the raw amino-acid sequence, 956 residues long: DNA ligase 4 (956 aa).

10 residues coordinate ATP: Glu307, Lys309, Ile310, Arg314, Glu371, Phe409, Glu476, Lys481, Lys498, and Lys500. The N6-AMP-lysine intermediate role is filled by Lys309. Glu371 provides a ligand contact to Mg(2+). Glu476 contributes to the Mg(2+) binding site. Residues Leu666–Arg700 are disordered. 2 BRCT domains span residues Arg700–Leu793 and Pro857–Leu956.

Belongs to the ATP-dependent DNA ligase family. It depends on Mg(2+) as a cofactor.

Its subcellular location is the nucleus. The catalysed reaction is ATP + (deoxyribonucleotide)n-3'-hydroxyl + 5'-phospho-(deoxyribonucleotide)m = (deoxyribonucleotide)n+m + AMP + diphosphate.. DNA ligase involved in DNA non-homologous end joining (NHEJ); required for double-strand break (DSB) repair. This Yarrowia lipolytica (strain CLIB 122 / E 150) (Yeast) protein is DNA ligase 4 (LIG4).